The sequence spans 569 residues: Formate hydrogenlyase subunit 5 (569 aa).

A propeptide spanning residues 538–569 (MTVVDVRKKKSKVVPYKELERYSIERKNSPLK) is cleaved from the precursor.

The protein belongs to the complex I 49 kDa subunit family. As to quaternary structure, FHL comprises of a formate dehydrogenase, unidentified electron carriers and a hydrogenase (isoenzyme 3). In this non-energy conserving pathway molecular hydrogen and carbodioxide from formate are released. Requires [4Fe-4S] cluster as cofactor. Ni(2+) is required as a cofactor.

This is Formate hydrogenlyase subunit 5 (hycE) from Escherichia coli (strain K12).